The sequence spans 671 residues: Protein cereblon (671 aa).

Acidic residues predominate over residues 1–11 (MDGEEAADIDE). Disordered regions lie at residues 1-59 (MDGE…VDGD), 104-130 (LTGT…PAQP), and 150-187 (GHNV…DAEA). Low complexity-rich tracts occupy residues 39-51 (QQQQ…SSGE) and 105-115 (TGTTTPTPTAP). Polar residues predominate over residues 162 to 173 (SISSRHSGSDMS). The region spanning 309–537 (RMLIFMHQHI…IIGSTLKQES (229 aa)) is the Lon N-terminal domain. Positions 536–645 (ESLFYCRYCN…LAGSSVRIGK (110 aa)) constitute a CULT domain. Zn(2+) is bound by residues C541, C544, C610, and C613.

It belongs to the CRBN family. Likely a component of a DCX (DDB1-CUL4-X-box) protein ligase complex. May interact with pic/DDB1. Ubiquitinated.

The protein localises to the nucleus. The protein operates within protein modification; protein ubiquitination. Substrate recognition component of a DCX (DDB1-CUL4-X-box) E3 protein ligase complex that mediates the ubiquitination and subsequent proteasomal degradation of target proteins. Has an essential role in mediating growth by negatively regulating insulin signaling. It also has a role in maintaining presynaptic function in the neuromuscular junction synapses of third-instar larvae. This chain is Protein cereblon, found in Drosophila grimshawi (Hawaiian fruit fly).